The primary structure comprises 276 residues: Rhomboid protease GlpG (276 aa).

Helical transmembrane passes span 94 to 114, 142 to 162, 169 to 189, 192 to 212, 229 to 249, and 250 to 270; these read GPVT…MSLI, IFMH…WYLG, LGSG…GYVQ, FSGP…GYVW, LIIF…GMSM, and ANGA…VDTL. The Nucleophile role is filled by Ser-201. His-254 is a catalytic residue.

The protein belongs to the peptidase S54 family.

The protein resides in the cell inner membrane. The catalysed reaction is Cleaves type-1 transmembrane domains using a catalytic dyad composed of serine and histidine that are contributed by different transmembrane domains.. Functionally, rhomboid-type serine protease that catalyzes intramembrane proteolysis. The sequence is that of Rhomboid protease GlpG from Salmonella typhi.